We begin with the raw amino-acid sequence, 337 residues long: MKLSRLALLSVFALASAPSWAESVVTVYSIDGLHDGDNSWYQVQFDAFTKATGITVRYVEGGGGVVVERLAKERTNPQADVLVTAPPFIQRAAAEKLLANFNTDTASAIPDANNLYSPLVKNYLSFIYNSKLLKTAPASWQDLLDGKFKNKLQYSTPGQAADGTAVMLQAFHSFGSKDAGFAYLGKLQANNVGPSASTGKLTALVNKGEIYVANGDLQMNLAQMERNPNVKIFWPANDKGERSALAIPYVIGLVQGAPQSENGKKLINFLLSKEAQTRVSELSWGMPVRSDVTPSDEHYKAATAALEGVQSWQPNWDDVAVSLSADISRWHKVTESE.

An N-terminal signal peptide occupies residues Met-1–Ala-21.

It belongs to the bacterial solute-binding protein 1 family.

Its subcellular location is the periplasm. Functionally, probably part of the PhnSTUV complex (TC 3.A.1.11.5) involved in 2-aminoethylphosphonate import. The sequence is that of Putative 2-aminoethylphosphonate-binding periplasmic protein (phnS) from Salmonella typhimurium (strain LT2 / SGSC1412 / ATCC 700720).